A 36-amino-acid chain; its full sequence is Amanexitide proprotein 2 (36 aa).

Residues 1–10 (MSDINATRLP) constitute a propeptide that is removed on maturation. A cross-link (cyclopeptide (Val-Pro)) is located at residues 11–19 (VFSLPVFFP). A propeptide spanning residues 20–36 (FVSDDIQAVLTRGESLC) is cleaved from the precursor.

The protein belongs to the MSDIN fungal toxin family. Post-translationally, processed by the macrocyclase-peptidase enzyme POPB to yield a toxic cyclic nonapeptide. POPB first removes 10 residues from the N-terminus. Conformational trapping of the remaining peptide forces the enzyme to release this intermediate rather than proceed to macrocyclization. The enzyme rebinds the remaining peptide in a different conformation and catalyzes macrocyclization of the N-terminal 9 residues. Expressed in basidiocarps.

In terms of biological role, cyclic nonapeptide that belongs to the MSDIN-like toxin family responsible for a large number of food poisoning cases and deaths. The polypeptide is Amanexitide proprotein 2 (Amanita exitialis (Guangzhou destroying angel)).